A 96-amino-acid chain; its full sequence is UPF0235 protein Pfl01_5322 (96 aa).

This sequence belongs to the UPF0235 family.

This is UPF0235 protein Pfl01_5322 from Pseudomonas fluorescens (strain Pf0-1).